We begin with the raw amino-acid sequence, 212 residues long: MHDYQQKFIEFAIQRNVLRFGEFTLKSGRTSPYFFNAGLFNTGNDLLELSKAYAAAIARSGLDYDIIFGPAYKGIPLATVTAMALATDGNSKPFAFNRKEKKDHGEGGNIVGAPLQGKVLIVDDVITAGTAIRESIDIIRAAGAEPAGVLIALDRQEKGNGELSAIQEVEKEFGIPVVSIIRLEQVLDYLKSNPEFAGHAENVASYRDRYGV.

Residue K26 coordinates 5-phospho-alpha-D-ribose 1-diphosphate. Residue 34 to 35 (FF) participates in orotate binding. Residues 72–73 (YK), R98, K99, K102, H104, and 123–131 (DDVITAGTA) each bind 5-phospho-alpha-D-ribose 1-diphosphate. The orotate site is built by T127 and R155.

The protein belongs to the purine/pyrimidine phosphoribosyltransferase family. PyrE subfamily. Homodimer. It depends on Mg(2+) as a cofactor.

It catalyses the reaction orotidine 5'-phosphate + diphosphate = orotate + 5-phospho-alpha-D-ribose 1-diphosphate. It participates in pyrimidine metabolism; UMP biosynthesis via de novo pathway; UMP from orotate: step 1/2. Catalyzes the transfer of a ribosyl phosphate group from 5-phosphoribose 1-diphosphate to orotate, leading to the formation of orotidine monophosphate (OMP). The chain is Orotate phosphoribosyltransferase from Marinobacter nauticus (strain ATCC 700491 / DSM 11845 / VT8) (Marinobacter aquaeolei).